Consider the following 197-residue polypeptide: Ribonuclease HII (197 aa).

Residues 9–197 (KLIAGVDEVG…APVKKALEQF (189 aa)) enclose the RNase H type-2 domain. Residues Asp15, Glu16, and Asp107 each coordinate a divalent metal cation.

This sequence belongs to the RNase HII family. Requires Mn(2+) as cofactor. Mg(2+) is required as a cofactor.

The protein resides in the cytoplasm. The catalysed reaction is Endonucleolytic cleavage to 5'-phosphomonoester.. In terms of biological role, endonuclease that specifically degrades the RNA of RNA-DNA hybrids. This Haemophilus influenzae (strain ATCC 51907 / DSM 11121 / KW20 / Rd) protein is Ribonuclease HII (rnhB).